A 551-amino-acid chain; its full sequence is Trigger factor (551 aa).

Residues 165–250 enclose the PPIase FKBP-type domain; the sequence is GDLVVLDFAG…ATDVRVPGET (86 aa). The disordered stretch occupies residues 442-551; the sequence is ADDDTIGKGH…APAKKKAAAE (110 aa). Residues 458-472 are compositionally biased toward basic and acidic residues; that stretch reads GHDHHDHDHDHDHAA. Residues 513-541 show a composition bias toward low complexity; sequence EAAPAPKKAPAKKAAAAKAEEAPAAAPKK. Positions 542 to 551 are enriched in basic residues; that stretch reads APAKKKAAAE.

Belongs to the FKBP-type PPIase family. Tig subfamily.

The protein localises to the cytoplasm. It carries out the reaction [protein]-peptidylproline (omega=180) = [protein]-peptidylproline (omega=0). Involved in protein export. Acts as a chaperone by maintaining the newly synthesized protein in an open conformation. Functions as a peptidyl-prolyl cis-trans isomerase. This Rhizorhabdus wittichii (strain DSM 6014 / CCUG 31198 / JCM 15750 / NBRC 105917 / EY 4224 / RW1) (Sphingomonas wittichii) protein is Trigger factor.